A 630-amino-acid chain; its full sequence is Peptidyl-prolyl cis-trans isomerase cyp15 (630 aa).

The interval 1–46 is disordered; that stretch reads MPEDSNTNDNNKRPLEDNNAVDGESDDDIGPMLPPPPGEDAPRKKK. WD repeat units follow at residues 70-108, 113-152, 157-198, 203-242, and 258-301; these read MHRD…IEFV, SHLS…MINM, YKPK…KPLH, MHSK…ALPD, and RKKK…REYD. One can recognise a PPIase cyclophilin-type domain in the interval 475 to 629; the sequence is LGTSAIIRTT…DDIKIINIDI (155 aa).

It belongs to the cyclophilin-type PPIase family.

The catalysed reaction is [protein]-peptidylproline (omega=180) = [protein]-peptidylproline (omega=0). In terms of biological role, PPIases accelerate the folding of proteins. It catalyzes the cis-trans isomerization of proline imidic peptide bonds in oligopeptides. The protein is Peptidyl-prolyl cis-trans isomerase cyp15 (cyp15) of Rhizopus delemar (strain RA 99-880 / ATCC MYA-4621 / FGSC 9543 / NRRL 43880) (Mucormycosis agent).